A 120-amino-acid polypeptide reads, in one-letter code: Large ribosomal subunit protein uL22 (120 aa).

The segment at 1-25 is disordered; sequence MFVNKKYTAKGKNLPSSPKKVRPIA.

This sequence belongs to the universal ribosomal protein uL22 family. As to quaternary structure, part of the 50S ribosomal subunit.

This protein binds specifically to 23S rRNA; its binding is stimulated by other ribosomal proteins, e.g. L4, L17, and L20. It is important during the early stages of 50S assembly. It makes multiple contacts with different domains of the 23S rRNA in the assembled 50S subunit and ribosome. In terms of biological role, the globular domain of the protein is located near the polypeptide exit tunnel on the outside of the subunit, while an extended beta-hairpin is found that lines the wall of the exit tunnel in the center of the 70S ribosome. The polypeptide is Large ribosomal subunit protein uL22 (Borrelia duttonii (strain Ly)).